Reading from the N-terminus, the 161-residue chain is Probable cell wall elongation regulator TseB (161 aa).

Residues 1–5 are Cytoplasmic-facing; sequence MRKKA. Residues 6–26 form a helical membrane-spanning segment; that stretch reads LIFTVIFGIIFLAVLLVSASI. Residues 27 to 161 lie on the Extracellular side of the membrane; that stretch reads YKSAMAQKEE…TGKILKNITP (135 aa).

Interacts with the penicillin-binding protein PBP2A, a monofunctional transpeptidase.

It localises to the cell membrane. Functionally, required for normal cell shape. Plays an important role in cell wall elongation during exponential phase and spore outgrowth. Probably regulates the activity of the penicillin-binding protein PBP2A through a direct interaction. Not required for PBP2A activity, stability and localization. The chain is Probable cell wall elongation regulator TseB from Bacillus subtilis (strain 168).